The chain runs to 153 residues: Endoribonuclease YbeY (153 aa).

Zn(2+) is bound by residues H114, H118, and H124.

Belongs to the endoribonuclease YbeY family. The cofactor is Zn(2+).

The protein resides in the cytoplasm. In terms of biological role, single strand-specific metallo-endoribonuclease involved in late-stage 70S ribosome quality control and in maturation of the 3' terminus of the 16S rRNA. This chain is Endoribonuclease YbeY, found in Shewanella oneidensis (strain ATCC 700550 / JCM 31522 / CIP 106686 / LMG 19005 / NCIMB 14063 / MR-1).